Consider the following 459-residue polypeptide: MAITGTIAAIATAIVPQQGSVGIVRVSGSQAIAIAQTLFDAPGKQVWESHRILYGYIRHPQTRQIVDEALLLLMKAPRSYTREDVVEFHCHGGIIAVQQVLQLCLESGARLAQPGEFTLRAFLNGRLDLTQAESIADLVGARSPQAAQTALAGLQGKLAHPIRQLRANCLDILAEIEARIDFEEDLPPLDDEAIISDIENIAAEISQLLATKDKGELLRTGLKVAIVGRPNVGKSSLLNAWSQSDRAIVTDLPGTTRDVVESQLVVGGIPVQVLDTAGIRETSDQVEKIGVERSRQAANTADLVLLTIDAATGWTTGDQEIYEQVKHRPLILVMNKIDLVEKQLITSLEYPENITQIVHTAAAQKQGIDSLETAILEIVQTGKVQAADMDLAINQRQAAALTQAKMSLEQVQATITQQLPLDFWTIDLRGAIQALGEITGEEVTESVLDRIFSRFCIGK.

Residues R25, E87, and R126 each coordinate (6S)-5-formyl-5,6,7,8-tetrahydrofolate. The TrmE-type G domain maps to G221–Q380. N231 lines the K(+) pocket. Residues N231–S236, T250–T256, and D275–G278 each bind GTP. Position 235 (S235) interacts with Mg(2+). K(+) is bound by residues T250, L252, and T255. Mg(2+) is bound at residue T256. Residue K459 participates in (6S)-5-formyl-5,6,7,8-tetrahydrofolate binding.

Belongs to the TRAFAC class TrmE-Era-EngA-EngB-Septin-like GTPase superfamily. TrmE GTPase family. As to quaternary structure, homodimer. Heterotetramer of two MnmE and two MnmG subunits. Requires K(+) as cofactor.

The protein resides in the cytoplasm. Exhibits a very high intrinsic GTPase hydrolysis rate. Involved in the addition of a carboxymethylaminomethyl (cmnm) group at the wobble position (U34) of certain tRNAs, forming tRNA-cmnm(5)s(2)U34. This chain is tRNA modification GTPase MnmE, found in Nostoc sp. (strain PCC 7120 / SAG 25.82 / UTEX 2576).